The primary structure comprises 133 residues: ATP synthase epsilon chain (133 aa).

It belongs to the ATPase epsilon chain family. In terms of assembly, F-type ATPases have 2 components, CF(1) - the catalytic core - and CF(0) - the membrane proton channel. CF(1) has five subunits: alpha(3), beta(3), gamma(1), delta(1), epsilon(1). CF(0) has three main subunits: a, b and c.

The protein resides in the cell membrane. Produces ATP from ADP in the presence of a proton gradient across the membrane. This chain is ATP synthase epsilon chain, found in Clostridium perfringens (strain SM101 / Type A).